A 127-amino-acid polypeptide reads, in one-letter code: Protein ApaG (127 aa).

The region spanning 3 to 127 is the ApaG domain; sequence DDPRYRVEVE…FVLSVPRTLH (125 aa).

This is Protein ApaG from Xanthomonas axonopodis pv. citri (strain 306).